The primary structure comprises 621 residues: MPPYPLLHRIDSPFDLRKLDRRELPALAAELRAFLIESVSKTGGHLSSNLGTVELSIALHYIFDTPEDRIVWDVGHQTYGHKILTGRREAMSRLRQFGGISGFPRRSESSYDTFGTAHSSTSISAALGMAVAARNRGEQRRSIAVIGDGAMSAGMAFEALNNAGDMRDINLLVILNDNEMSISPPVGALTKILARMFSGRTYNAARRAGEKVLGVSPPMLDFARKVEEHVKGLITPGTLFEEFGFHYYGPIDGHDLDALIPTLQNLRKLNGPHFLHVITRKGQGYKLAEADPVLYHGVSTFDHTAGIQTAKGAAKLTYTQVFGDWLCDIAAQDEKVIGITPAMREGSGMVRFAQEFPNRYYDVGIAEQHALTFAAGLACEGFKPVVAIYSTFLQRAYDQLIHDIALQNLPVMFAIDRAGLVGADGATHHGAFDLSYLGCIPNLVVMAPADENECRQMLYTAYRHNGPAAVRYPRGGGMQVGPETAMSALPIGKGEIRRSGHRIALLVFGSLLFNALQAAEQLDATVANMRFVKPLDVTLIEELAASHDLLVTLEENIVIGGAGSEVARVLESLSDRPQLLRLGLPDTFIDHGDQSQLLESVGLDAPGIVAAIRRRFSPDNN.

Residues H76 and A117–S119 contribute to the thiamine diphosphate site. D148 provides a ligand contact to Mg(2+). Thiamine diphosphate contacts are provided by residues G149–A150, N178, Y285, and E367. N178 provides a ligand contact to Mg(2+).

The protein belongs to the transketolase family. DXPS subfamily. In terms of assembly, homodimer. Requires Mg(2+) as cofactor. Thiamine diphosphate is required as a cofactor.

It carries out the reaction D-glyceraldehyde 3-phosphate + pyruvate + H(+) = 1-deoxy-D-xylulose 5-phosphate + CO2. It participates in metabolic intermediate biosynthesis; 1-deoxy-D-xylulose 5-phosphate biosynthesis; 1-deoxy-D-xylulose 5-phosphate from D-glyceraldehyde 3-phosphate and pyruvate: step 1/1. Its function is as follows. Catalyzes the acyloin condensation reaction between C atoms 2 and 3 of pyruvate and glyceraldehyde 3-phosphate to yield 1-deoxy-D-xylulose-5-phosphate (DXP). The protein is 1-deoxy-D-xylulose-5-phosphate synthase of Aromatoleum aromaticum (strain DSM 19018 / LMG 30748 / EbN1) (Azoarcus sp. (strain EbN1)).